Consider the following 466-residue polypeptide: Keratin, type II cytoskeletal 7 (466 aa).

S2 carries the N-acetylserine modification. A phosphoserine mark is found at S2 and S7. Residues 2–91 form a head region; the sequence is SLHFGSQVFS…DPSIQQVRQE (90 aa). An O-linked (GlcNAc) serine glycan is attached at S12. R20 is subject to Dimethylated arginine; alternate. An Omega-N-methylarginine; alternate modification is found at R20. Residues S54, S72, and S84 each carry the phosphoserine modification. The interval 91–127 is coil 1A; it reads EEREQIKTLNNKFASFIDKVRFLEQQNKLLETKWALL. The 313-residue stretch at 92-404 folds into the IF rod domain; that stretch reads EREQIKTLNN…KLLEGEESRL (313 aa). T98 is modified (phosphothreonine). The interval 128–145 is linker 1; that stretch reads QEQKSAKSNRLPGIFEAQ. K131 participates in a covalent cross-link: Glycyl lysine isopeptide (Lys-Gly) (interchain with G-Cter in SUMO2). The coil 1B stretch occupies residues 146–237; the sequence is IAGLRKQLEA…TLYEQELKEL (92 aa). K180 is modified (N6-acetyllysine). Residues 238-261 are linker 12; the sequence is QSEVSDTSVVLSMDNNRSLDLDSI. Position 255 is a phosphoserine (S255). The coil 2 stretch occupies residues 262-400; sequence IAEVKAQYEE…ATYRKLLEGE (139 aa). Glycyl lysine isopeptide (Lys-Gly) (interchain with G-Cter in SUMO2) cross-links involve residues K266 and K287. The residue at position 290 (T290) is a Phosphothreonine. Glycyl lysine isopeptide (Lys-Gly) (interchain with G-Cter in SUMO2) cross-links involve residues K297 and K332. Positions 401 to 466 are tail; it reads ESRLTGDGVG…TSATSRSPRK (66 aa).

This sequence belongs to the intermediate filament family. As to quaternary structure, heterotetramer of two type I and two type II keratins. Interacts with eukaryotic translation initiator factor 3 (eIF3) subunit EIF3S10. Interacts with GPER1. In terms of processing, arg-20 is dimethylated, probably to asymmetric dimethylarginine.

In terms of biological role, blocks interferon-dependent interphase and stimulates DNA synthesis in cells. This Bos taurus (Bovine) protein is Keratin, type II cytoskeletal 7.